The primary structure comprises 329 residues: Porphobilinogen deaminase (329 aa).

At C253 the chain carries S-(dipyrrolylmethanemethyl)cysteine.

It belongs to the HMBS family. As to quaternary structure, monomer. Dipyrromethane serves as cofactor.

The catalysed reaction is 4 porphobilinogen + H2O = hydroxymethylbilane + 4 NH4(+). Its function is as follows. Tetrapolymerization of the monopyrrole PBG into the hydroxymethylbilane pre-uroporphyrinogen in several discrete steps. The polypeptide is Porphobilinogen deaminase (Leifsonia xyli subsp. xyli (strain CTCB07)).